The following is a 344-amino-acid chain: L-rhamnose-proton symporter (344 aa).

The next 10 membrane-spanning stretches (helical) occupy residues 4-24 (AITM…CFYA), 38-58 (WSVG…ALLL), 68-88 (FSLS…IGNI), 101-121 (MGIG…TPII), 137-157 (TLLG…AGQL), 175-195 (LVLA…MNAA), 214-234 (LPSY…FCFI), 259-279 (VLLS…YAWG), 290-310 (ISWM…GLVL), and 323-343 (VLSL…IGMA).

Belongs to the L-rhamnose transporter (TC 2.A.7.6) family.

It is found in the cell inner membrane. The catalysed reaction is L-rhamnopyranose(in) + H(+)(in) = L-rhamnopyranose(out) + H(+)(out). Functionally, uptake of L-rhamnose across the cytoplasmic membrane with the concomitant transport of protons into the cell (symport system). In Shigella dysenteriae serotype 1 (strain Sd197), this protein is L-rhamnose-proton symporter.